The chain runs to 267 residues: 4-hydroxy-tetrahydrodipicolinate reductase (267 aa).

NAD(+) is bound by residues G10–M15 and E36. Position 37 (R37) interacts with NADP(+). NAD(+) is bound by residues G99 to T101 and A123 to F126. Residue H156 is the Proton donor/acceptor of the active site. H157 is a binding site for (S)-2,3,4,5-tetrahydrodipicolinate. K160 functions as the Proton donor in the catalytic mechanism. Residue G166–T167 coordinates (S)-2,3,4,5-tetrahydrodipicolinate.

The protein belongs to the DapB family.

It is found in the cytoplasm. It carries out the reaction (S)-2,3,4,5-tetrahydrodipicolinate + NAD(+) + H2O = (2S,4S)-4-hydroxy-2,3,4,5-tetrahydrodipicolinate + NADH + H(+). The enzyme catalyses (S)-2,3,4,5-tetrahydrodipicolinate + NADP(+) + H2O = (2S,4S)-4-hydroxy-2,3,4,5-tetrahydrodipicolinate + NADPH + H(+). It participates in amino-acid biosynthesis; L-lysine biosynthesis via DAP pathway; (S)-tetrahydrodipicolinate from L-aspartate: step 4/4. Functionally, catalyzes the conversion of 4-hydroxy-tetrahydrodipicolinate (HTPA) to tetrahydrodipicolinate. In Laribacter hongkongensis (strain HLHK9), this protein is 4-hydroxy-tetrahydrodipicolinate reductase.